The primary structure comprises 112 residues: Larval cuticle protein 3 (112 aa).

The signal sequence occupies residues 1–16; the sequence is MFKILLVCSLAALVAA. A Chitin-binding type R&amp;R domain is found at 31–92; it reads PDGFVSKLVL…PQSDLLPTPP (62 aa).

Component of the larval cuticle. The protein is Larval cuticle protein 3 (Lcp3) of Drosophila melanogaster (Fruit fly).